The sequence spans 181 residues: Large ribosomal subunit protein uL5 (181 aa).

It belongs to the universal ribosomal protein uL5 family. As to quaternary structure, part of the 50S ribosomal subunit; part of the 5S rRNA/L5/L18/L25 subcomplex. Contacts the 5S rRNA and the P site tRNA. Forms a bridge to the 30S subunit in the 70S ribosome.

Its function is as follows. This is one of the proteins that bind and probably mediate the attachment of the 5S RNA into the large ribosomal subunit, where it forms part of the central protuberance. In the 70S ribosome it contacts protein S13 of the 30S subunit (bridge B1b), connecting the 2 subunits; this bridge is implicated in subunit movement. Contacts the P site tRNA; the 5S rRNA and some of its associated proteins might help stabilize positioning of ribosome-bound tRNAs. In Helicobacter acinonychis (strain Sheeba), this protein is Large ribosomal subunit protein uL5.